Reading from the N-terminus, the 310-residue chain is Dicarboxylate carrier UCP2 (310 aa).

The Mitochondrial intermembrane portion of the chain corresponds to 1 to 10 (MVGFRAGDVP). Residues 11-32 (PTATVKFIGAGTAACIADLFTF) traverse the membrane as a helical segment. 3 Solcar repeats span residues 11 to 107 (PTAT…VKQF), 115 to 204 (AGIG…IKDA), and 213 to 298 (DDLP…LKRA). The Mitochondrial matrix segment spans residues 33 to 78 (PLDTAKVRLQIQGENKASTNMGRGPVKYRGVFGTISTMVRVEGPRS). The helical transmembrane segment at 79 to 101 (LYSGLVAGLQRQMSFASVRIGLY) threads the bilayer. Residues 102 to 120 (DSVKQFYTKGSDHAGIGSR) are Mitochondrial intermembrane-facing. The helical transmembrane segment at 121–137 (LMAGCTTGAMAVAVAQP) threads the bilayer. The Mitochondrial matrix segment spans residues 138-181 (TDVLKVRFQAQVSAGASKRYHSTMDAYRTIAKEEGFRGLWKGTG). A helical transmembrane segment spans residues 182-198 (PNITRNAIVNCTELVTY). The Mitochondrial intermembrane segment spans residues 199–215 (DLIKDALLKSSLMTDDL). The chain crosses the membrane as a helical span at residues 216-235 (PCHFTSAFGAGFCTTIIASP). Residues 236–269 (VDVVKTRYMNSAQGQYSSALNCAVAMLTKKGPKA) are Mitochondrial matrix-facing. The chain crosses the membrane as a helical span at residues 270–292 (FFKGFMPSFLRLGSWNVVMFVTY). Residues 277-299 (SFLRLGSWNVVMFVTYEQLKRAM) are purine nucleotide binding. Residues 293–310 (EQLKRAMMAARQNWHTPL) are Mitochondrial intermembrane-facing.

The protein belongs to the mitochondrial carrier (TC 2.A.29) family. Homotetramer. Adopts an asymmetrical dimer of dimers functional form.

Its subcellular location is the mitochondrion inner membrane. The enzyme catalyses L-aspartate(out) + phosphate(in) + H(+)(in) = L-aspartate(in) + phosphate(out) + H(+)(out). The catalysed reaction is oxaloacetate(out) + phosphate(in) + H(+)(in) = oxaloacetate(in) + phosphate(out) + H(+)(out). It catalyses the reaction (S)-malate(out) + phosphate(in) + H(+)(in) = (S)-malate(in) + phosphate(out) + H(+)(out). It carries out the reaction malonate(out) + phosphate(in) + H(+)(in) = malonate(in) + phosphate(out) + H(+)(out). The enzyme catalyses sulfate(out) + phosphate(in) + H(+)(in) = sulfate(in) + phosphate(out) + H(+)(out). The catalysed reaction is (S)-malate(out) = (S)-malate(in). It catalyses the reaction L-aspartate(out) = L-aspartate(in). It carries out the reaction phosphate(in) = phosphate(out). The enzyme catalyses chloride(in) = chloride(out). The catalysed reaction is H(+)(in) = H(+)(out). It catalyses the reaction a long-chain fatty acid(out) = a long-chain fatty acid(in). Its function is as follows. UCP are mitochondrial transporter proteins that create proton leaks across the inner mitochondrial membrane, thus uncoupling oxidative phosphorylation from ATP synthesis. As a result, energy is dissipated in the form of heat. Antiporter that exports dicarboxylate intermediates of the Krebs cycle in exchange for phosphate plus a proton across the inner membrane of mitochondria, a process driven by mitochondrial motive force with an overall impact on glycolysis, glutaminolysis and glutathione-dependent redox balance. Continuous export of oxaloacetate and related four-carbon dicarboxylates from mitochondrial matrix into the cytosol negatively regulates the oxidation of acetyl-CoA substrates via the Krebs cycle, lowering the ATP/ADP ratio and reactive oxygen species (ROS) production. May mediate inducible proton entry into the mitochondrial matrix affecting ATP turnover as a protection mechanism against oxidative stress. The proton currents are most likely associated with fatty acid flipping across the inner membrane of mitochondria in a metabolic process regulated by free fatty acids and purine nucleotides. This is Dicarboxylate carrier UCP2 (ucp2) from Danio rerio (Zebrafish).